We begin with the raw amino-acid sequence, 588 residues long: Phosphomethylpyrimidine synthase (588 aa).

Substrate is bound by residues Asn212, Met241, Tyr270, His306, 326-328, 367-370, and Glu406; these read SRG and DGLR. Zn(2+) is bound at residue His410. Substrate is bound at residue Tyr433. His474 is a binding site for Zn(2+). [4Fe-4S] cluster is bound by residues Cys554, Cys557, and Cys562.

The protein belongs to the ThiC family. As to quaternary structure, homodimer. The cofactor is [4Fe-4S] cluster.

The enzyme catalyses 5-amino-1-(5-phospho-beta-D-ribosyl)imidazole + S-adenosyl-L-methionine = 4-amino-2-methyl-5-(phosphooxymethyl)pyrimidine + CO + 5'-deoxyadenosine + formate + L-methionine + 3 H(+). The protein operates within cofactor biosynthesis; thiamine diphosphate biosynthesis. In terms of biological role, catalyzes the synthesis of the hydroxymethylpyrimidine phosphate (HMP-P) moiety of thiamine from aminoimidazole ribotide (AIR) in a radical S-adenosyl-L-methionine (SAM)-dependent reaction. The sequence is that of Phosphomethylpyrimidine synthase from Bartonella quintana (strain Toulouse) (Rochalimaea quintana).